Here is a 287-residue protein sequence, read N- to C-terminus: Lipoyl synthase (287 aa).

Positions 34, 39, 45, 60, 64, 67, and 273 each coordinate [4Fe-4S] cluster. The Radical SAM core domain occupies 46–262; it reads WNKRHATVMI…KYIAYSKGFL (217 aa).

Belongs to the radical SAM superfamily. Lipoyl synthase family. Requires [4Fe-4S] cluster as cofactor.

The protein localises to the cytoplasm. It carries out the reaction [[Fe-S] cluster scaffold protein carrying a second [4Fe-4S](2+) cluster] + N(6)-octanoyl-L-lysyl-[protein] + 2 oxidized [2Fe-2S]-[ferredoxin] + 2 S-adenosyl-L-methionine + 4 H(+) = [[Fe-S] cluster scaffold protein] + N(6)-[(R)-dihydrolipoyl]-L-lysyl-[protein] + 4 Fe(3+) + 2 hydrogen sulfide + 2 5'-deoxyadenosine + 2 L-methionine + 2 reduced [2Fe-2S]-[ferredoxin]. It functions in the pathway protein modification; protein lipoylation via endogenous pathway; protein N(6)-(lipoyl)lysine from octanoyl-[acyl-carrier-protein]: step 2/2. Its function is as follows. Catalyzes the radical-mediated insertion of two sulfur atoms into the C-6 and C-8 positions of the octanoyl moiety bound to the lipoyl domains of lipoate-dependent enzymes, thereby converting the octanoylated domains into lipoylated derivatives. The sequence is that of Lipoyl synthase from Wolbachia sp. subsp. Brugia malayi (strain TRS).